Consider the following 359-residue polypeptide: Stearoyl-CoA desaturase (359 aa).

Residues 1–72 (MPAHLLQDDI…EGPSPKVEYV (72 aa)) are Cytoplasmic-facing. A helical membrane pass occupies residues 73 to 93 (WRNIILMSLLHLGALYGITLI). Asn-75 contacts substrate. Topologically, residues 94–97 (PTCK) are lumenal. A helical membrane pass occupies residues 98 to 118 (FYTWLWGVFYYFVSALGITAG). The Cytoplasmic portion of the chain corresponds to 119–217 (AHRLWSHRSY…EKLVMFQRRY (99 aa)). Residues His-120 and His-125 each coordinate Fe cation. Positions 120–125 (HRLWSH) match the Histidine box-1 motif. Residues Asn-148, Arg-155, and Asp-156 each coordinate substrate. 3 residues coordinate Fe cation: His-157, His-160, and His-161. A Histidine box-2 motif is present at residues 157 to 161 (HRAHH). Arg-188 and Lys-189 together coordinate substrate. Phosphoserine is present on residues Ser-198 and Ser-203. The helical transmembrane segment at 218–237 (YKPGLLMMCFILPTLVPWYF) threads the bilayer. Residues 238–241 (WGET) lie on the Lumenal side of the membrane. The helical transmembrane segment at 242 to 263 (FQNSVFVATFLRYAVVLNATWL) threads the bilayer. Position 262 (Trp-262) interacts with substrate. The Cytoplasmic segment spans residues 264–359 (VNSAAHLFGY…RTGDGNYKSG (96 aa)). 4 residues coordinate Fe cation: His-269, His-298, His-301, and His-302. Residues 298-302 (HNYHH) carry the Histidine box-3 motif.

The protein belongs to the fatty acid desaturase type 1 family. As to quaternary structure, may self-associate and form homodimers. It depends on Fe(2+) as a cofactor. Detected in fetal liver, lung and brain. Highly expressed in adult adipose tissue, and at lower levels in adult brain and lung.

It localises to the endoplasmic reticulum membrane. It carries out the reaction octadecanoyl-CoA + 2 Fe(II)-[cytochrome b5] + O2 + 2 H(+) = (9Z)-octadecenoyl-CoA + 2 Fe(III)-[cytochrome b5] + 2 H2O. The catalysed reaction is hexadecanoyl-CoA + 2 Fe(II)-[cytochrome b5] + O2 + 2 H(+) = (9Z)-hexadecenoyl-CoA + 2 Fe(III)-[cytochrome b5] + 2 H2O. In terms of biological role, stearoyl-CoA desaturase that utilizes O(2) and electrons from reduced cytochrome b5 to introduce the first double bond into saturated fatty acyl-CoA substrates. Catalyzes the insertion of a cis double bond at the delta-9 position into fatty acyl-CoA substrates including palmitoyl-CoA and stearoyl-CoA. Gives rise to a mixture of 16:1 and 18:1 unsaturated fatty acids. Plays an important role in lipid biosynthesis. Plays an important role in regulating the expression of genes that are involved in lipogenesis and in regulating mitochondrial fatty acid oxidation. Plays an important role in body energy homeostasis. Contributes to the biosynthesis of membrane phospholipids, cholesterol esters and triglycerides. The polypeptide is Stearoyl-CoA desaturase (SCD) (Homo sapiens (Human)).